Reading from the N-terminus, the 655-residue chain is Mannosyl-oligosaccharide 1,2-alpha-mannosidase IA (655 aa).

The Cytoplasmic portion of the chain corresponds to Met-1 to Lys-43. The chain crosses the membrane as a helical; Signal-anchor for type II membrane protein span at residues Phe-44–Leu-64. Topologically, residues Pro-65–Lys-655 are lumenal. A disulfide bridge links Cys-478 with Cys-510. Asn-515 is a glycosylation site (N-linked (GlcNAc...) asparagine). Glu-524 (proton donor) is an active-site residue. Residue Thr-635 participates in Ca(2+) binding.

It belongs to the glycosyl hydrolase 47 family. The cofactor is Ca(2+). In terms of processing, N-linked glycan at Asn-515 consists of Man(6)-GlcNAc(2).

The protein localises to the golgi apparatus membrane. It carries out the reaction N(4)-(alpha-D-Man-(1-&gt;2)-alpha-D-Man-(1-&gt;2)-alpha-D-Man-(1-&gt;3)-[alpha-D-Man-(1-&gt;2)-alpha-D-Man-(1-&gt;3)-[alpha-D-Man-(1-&gt;2)-alpha-D-Man-(1-&gt;6)]-alpha-D-Man-(1-&gt;6)]-beta-D-Man-(1-&gt;4)-beta-D-GlcNAc-(1-&gt;4)-beta-D-GlcNAc)-L-asparaginyl-[protein] (N-glucan mannose isomer 9A1,2,3B1,2,3) + 4 H2O = N(4)-(alpha-D-Man-(1-&gt;3)-[alpha-D-Man-(1-&gt;3)-[alpha-D-Man-(1-&gt;6)]-alpha-D-Man-(1-&gt;6)]-beta-D-Man-(1-&gt;4)-beta-D-GlcNAc-(1-&gt;4)-beta-D-GlcNAc)-L-asparaginyl-[protein] (N-glucan mannose isomer 5A1,2) + 4 beta-D-mannose. The enzyme catalyses N(4)-(alpha-D-Man-(1-&gt;2)-alpha-D-Man-(1-&gt;2)-alpha-D-Man-(1-&gt;3)-[alpha-D-Man-(1-&gt;3)-[alpha-D-Man-(1-&gt;2)-alpha-D-Man-(1-&gt;6)]-alpha-D-Man-(1-&gt;6)]-beta-D-Man-(1-&gt;4)-beta-D-GlcNAc-(1-&gt;4)-beta-D-GlcNAc)-L-asparaginyl-[protein] (N-glucan mannose isomer 8A1,2,3B1,3) + 3 H2O = N(4)-(alpha-D-Man-(1-&gt;3)-[alpha-D-Man-(1-&gt;3)-[alpha-D-Man-(1-&gt;6)]-alpha-D-Man-(1-&gt;6)]-beta-D-Man-(1-&gt;4)-beta-D-GlcNAc-(1-&gt;4)-beta-D-GlcNAc)-L-asparaginyl-[protein] (N-glucan mannose isomer 5A1,2) + 3 beta-D-mannose. Its pathway is protein modification; protein glycosylation. Its activity is regulated as follows. Inhibited by both 1-deoxymannojirimycin and kifunensine. In terms of biological role, involved in the maturation of Asn-linked oligosaccharides. Progressively trim alpha-1,2-linked mannose residues from Man(9)GlcNAc(2) to produce Man(5)GlcNAc(2). The polypeptide is Mannosyl-oligosaccharide 1,2-alpha-mannosidase IA (Man1a1) (Mus musculus (Mouse)).